Here is an 814-residue protein sequence, read N- to C-terminus: Rho GTPase-activating protein 44 (814 aa).

The region spanning 14 to 249 (QTVGRAEKTE…IKAQQEAWVE (236 aa)) is the BAR domain. The region spanning 255-445 (KPLEEHLMIS…PIIQHADWFF (191 aa)) is the Rho-GAP domain. Disordered regions lie at residues 467 to 493 (ANYS…RPLS), 528 to 769 (RGSS…MSTD), and 784 to 814 (STLR…STAL). Basic and acidic residues predominate over residues 479-489 (PADRRQPEQAR). Phosphoserine is present on Ser493. 5 stretches are compositionally biased toward low complexity: residues 567 to 581 (SPAT…SGAS), 598 to 612 (SPGS…SIQG), 622 to 637 (PQPA…DQSP), 684 to 704 (SPYG…LSPA), and 741 to 752 (SVSLSASSPQST). Residues 727–814 (KPRQRPTLPP…SEEESESTAL (88 aa)) form an interaction with BST2 region. Over residues 790–805 (PLEHARRHSATDKRDS) the composition is skewed to basic and acidic residues. At Ser805 the chain carries Phosphoserine. The short motif at 811–814 (STAL) is the PDZ-binding element.

In terms of assembly, interacts with BST2 (via cytoplasmic domain). Interacts (probably via PDZ-binding motif) with SHANK3 (via PDZ domain); the interaction takes place in dendritic spines and promotes GRIA1 exocytosis. Specifically expressed in brain (at protein level). Detected in olfactory bulb, cortex, hippocampus, diencephalon and cerebellum (at protein level). Expressed in hippocampal neurons (at protein level).

It is found in the cell projection. The protein localises to the dendritic spine. Its subcellular location is the recycling endosome. It localises to the presynapse. The protein resides in the dendrite. In terms of biological role, GTPase-activating protein (GAP) that stimulates the GTPase activity of Rho-type GTPases. Thereby, controls Rho-type GTPases cycling between their active GTP-bound and inactive GDP-bound states. Acts as a GAP at least for CDC42 and RAC1. In neurons, is involved in dendritic spine formation and synaptic plasticity in a specific RAC1-GAP activity. Limits the initiation of exploratory dendritic filopodia. Recruited to actin-patches that seed filopodia, binds specifically to plasma membrane sections that are deformed inward by acto-myosin mediated contractile forces. Acts through GAP activity on RAC1 to reduce actin polymerization necessary for filopodia formation. In association with SHANK3, promotes GRIA1 exocytosis from recycling endosomes and spine morphological changes associated to long-term potentiation. This Mus musculus (Mouse) protein is Rho GTPase-activating protein 44.